A 615-amino-acid polypeptide reads, in one-letter code: Dihydroxy-acid dehydratase (615 aa).

Residue Asp81 coordinates Mg(2+). Cys122 serves as a coordination point for [2Fe-2S] cluster. The Mg(2+) site is built by Asp123 and Lys124. Residue Lys124 is modified to N6-carboxylysine. Cys195 is a binding site for [2Fe-2S] cluster. Mg(2+) is bound at residue Glu491. Ser517 acts as the Proton acceptor in catalysis.

This sequence belongs to the IlvD/Edd family. In terms of assembly, homodimer. The cofactor is [2Fe-2S] cluster. It depends on Mg(2+) as a cofactor.

It catalyses the reaction (2R)-2,3-dihydroxy-3-methylbutanoate = 3-methyl-2-oxobutanoate + H2O. It carries out the reaction (2R,3R)-2,3-dihydroxy-3-methylpentanoate = (S)-3-methyl-2-oxopentanoate + H2O. The protein operates within amino-acid biosynthesis; L-isoleucine biosynthesis; L-isoleucine from 2-oxobutanoate: step 3/4. It participates in amino-acid biosynthesis; L-valine biosynthesis; L-valine from pyruvate: step 3/4. In terms of biological role, functions in the biosynthesis of branched-chain amino acids. Catalyzes the dehydration of (2R,3R)-2,3-dihydroxy-3-methylpentanoate (2,3-dihydroxy-3-methylvalerate) into 2-oxo-3-methylpentanoate (2-oxo-3-methylvalerate) and of (2R)-2,3-dihydroxy-3-methylbutanoate (2,3-dihydroxyisovalerate) into 2-oxo-3-methylbutanoate (2-oxoisovalerate), the penultimate precursor to L-isoleucine and L-valine, respectively. The polypeptide is Dihydroxy-acid dehydratase (Shewanella halifaxensis (strain HAW-EB4)).